Here is a 194-residue protein sequence, read N- to C-terminus: Holliday junction branch migration complex subunit RuvA (194 aa).

The domain I stretch occupies residues 1–62 (MIGYLKGNVI…EDSLDLYGFK (62 aa)). Positions 63–136 (TMEERELFET…KGKLKDMSGD (74 aa)) are domain II. The tract at residues 136-140 (DFEEP) is flexible linker. The segment at 141–194 (LPDNRNTELSDALASLGYSELEIEEALSNADIKNNGSLEENIKKALGYLGSKGS) is domain III.

This sequence belongs to the RuvA family. As to quaternary structure, homotetramer. Forms an RuvA(8)-RuvB(12)-Holliday junction (HJ) complex. HJ DNA is sandwiched between 2 RuvA tetramers; dsDNA enters through RuvA and exits via RuvB. An RuvB hexamer assembles on each DNA strand where it exits the tetramer. Each RuvB hexamer is contacted by two RuvA subunits (via domain III) on 2 adjacent RuvB subunits; this complex drives branch migration. In the full resolvosome a probable DNA-RuvA(4)-RuvB(12)-RuvC(2) complex forms which resolves the HJ.

It is found in the cytoplasm. The RuvA-RuvB-RuvC complex processes Holliday junction (HJ) DNA during genetic recombination and DNA repair, while the RuvA-RuvB complex plays an important role in the rescue of blocked DNA replication forks via replication fork reversal (RFR). RuvA specifically binds to HJ cruciform DNA, conferring on it an open structure. The RuvB hexamer acts as an ATP-dependent pump, pulling dsDNA into and through the RuvAB complex. HJ branch migration allows RuvC to scan DNA until it finds its consensus sequence, where it cleaves and resolves the cruciform DNA. This chain is Holliday junction branch migration complex subunit RuvA, found in Halothermothrix orenii (strain H 168 / OCM 544 / DSM 9562).